Reading from the N-terminus, the 362-residue chain is 3-dehydroquinate synthase (362 aa).

NAD(+) contacts are provided by residues 71–76, 105–109, 129–130, lysine 142, lysine 151, and 169–172; these read DGERYK, GVIGD, TT, and CLKT. Positions 184, 247, and 264 each coordinate Zn(2+).

This sequence belongs to the sugar phosphate cyclases superfamily. Dehydroquinate synthase family. The cofactor is Co(2+). Zn(2+) is required as a cofactor. Requires NAD(+) as cofactor.

It localises to the cytoplasm. It catalyses the reaction 7-phospho-2-dehydro-3-deoxy-D-arabino-heptonate = 3-dehydroquinate + phosphate. It participates in metabolic intermediate biosynthesis; chorismate biosynthesis; chorismate from D-erythrose 4-phosphate and phosphoenolpyruvate: step 2/7. Catalyzes the conversion of 3-deoxy-D-arabino-heptulosonate 7-phosphate (DAHP) to dehydroquinate (DHQ). In Salmonella arizonae (strain ATCC BAA-731 / CDC346-86 / RSK2980), this protein is 3-dehydroquinate synthase.